The following is a 525-amino-acid chain: MTENIHKHRILILDFGSQYTQLVARRVRELGVYCELWAWDVTEAQIRDFNPSGIILSGGPESTTEENSPRAPQYVFEAGVPVFGVCYGMQTMAMQLGGHVEASNEREFGYAQVEVVNDSALVRGIEDALTADGKPLLDVWMSHGDKVTAIPSDFVTVASTESCPFAIMANEEKRFYGVQFHPEVTHTRQGMRMLERFVRDICQCEALWTPAKIIDDAVARIREQVGDDKVILGLSGGVDSSVTAMLLHRAIGKNLTCVFVDNGLLRLNEAEQVLDMFGDHFGLNIVHVPAEARFLSALAGENDPEAKRKIIGRVFVEVFDEEALKLEDVKWLAQGTIYPDVIESAASATGKAHVIKSHHNVGGLPKEMKMGLVEPLKELFKDEVRKIGLELGLPYDMLYRHPFPGPGLGVRVLGEVKKEYCDLLRRADAIFIEELRKADLYDKVSQAFTVFLPVRSVGVMGDGRKYDWVVSLRAVETIDFMTAHWAHLPYDFLGRVSNRIINEVNGISRVVYDISGKPPATIEWE.

In terms of domain architecture, Glutamine amidotransferase type-1 spans 9-207 (RILILDFGSQ…VRDICQCEAL (199 aa)). Cysteine 86 acts as the Nucleophile in catalysis. Residues histidine 181 and glutamate 183 contribute to the active site. In terms of domain architecture, GMPS ATP-PPase spans 208-400 (WTPAKIIDDA…LGLPYDMLYR (193 aa)). 235–241 (SGGVDSS) contributes to the ATP binding site.

In terms of assembly, homodimer.

It carries out the reaction XMP + L-glutamine + ATP + H2O = GMP + L-glutamate + AMP + diphosphate + 2 H(+). It functions in the pathway purine metabolism; GMP biosynthesis; GMP from XMP (L-Gln route): step 1/1. In terms of biological role, catalyzes the synthesis of GMP from XMP. The protein is GMP synthase [glutamine-hydrolyzing] of Escherichia coli O17:K52:H18 (strain UMN026 / ExPEC).